The chain runs to 97 residues: Biogenesis of lysosome-related organelles complex 1 subunit SNN1 (97 aa).

A coiled-coil region spans residues 45 to 97 (VVRLKQIRNLLKEEQEYYNEEEGLGVERERLEELELRVEKLTQKYKKLLADCV).

The protein belongs to the SNAPIN family. As to quaternary structure, component of the biogenesis of lysosome-related organelles complex-1 (BLOC-1).

Its subcellular location is the endosome. Component of the biogenesis of lysosome-related organelles complex-1 (BLOC-1), a complex involved in endosomal cargo sorting. This Lachancea thermotolerans (strain ATCC 56472 / CBS 6340 / NRRL Y-8284) (Yeast) protein is Biogenesis of lysosome-related organelles complex 1 subunit SNN1 (SNN1).